Consider the following 148-residue polypeptide: Large ribosomal subunit protein uL13 (148 aa).

The disordered stretch occupies residues 128-148; sequence PEHPHQAQNPQPFEINAKVEK.

It belongs to the universal ribosomal protein uL13 family. As to quaternary structure, part of the 50S ribosomal subunit.

In terms of biological role, this protein is one of the early assembly proteins of the 50S ribosomal subunit, although it is not seen to bind rRNA by itself. It is important during the early stages of 50S assembly. The chain is Large ribosomal subunit protein uL13 from Saccharopolyspora erythraea (strain ATCC 11635 / DSM 40517 / JCM 4748 / NBRC 13426 / NCIMB 8594 / NRRL 2338).